Here is a 169-residue protein sequence, read N- to C-terminus: S-ribosylhomocysteine lyase (169 aa).

Residues His54, His58, and Cys128 each coordinate Fe cation.

It belongs to the LuxS family. As to quaternary structure, homodimer. Requires Fe cation as cofactor.

The enzyme catalyses S-(5-deoxy-D-ribos-5-yl)-L-homocysteine = (S)-4,5-dihydroxypentane-2,3-dione + L-homocysteine. Functionally, involved in the synthesis of autoinducer 2 (AI-2) which is secreted by bacteria and is used to communicate both the cell density and the metabolic potential of the environment. The regulation of gene expression in response to changes in cell density is called quorum sensing. Catalyzes the transformation of S-ribosylhomocysteine (RHC) to homocysteine (HC) and 4,5-dihydroxy-2,3-pentadione (DPD). The chain is S-ribosylhomocysteine lyase from Shewanella sediminis (strain HAW-EB3).